Reading from the N-terminus, the 315-residue chain is DNA-directed RNA polymerase subunit alpha (315 aa).

Residues 1–228 (MLEIEKPKIE…EHFKLFMTLT (228 aa)) are alpha N-terminal domain (alpha-NTD). Residues 245–315 (KEKVLEMTIE…LGLGLRKSED (71 aa)) are alpha C-terminal domain (alpha-CTD).

The protein belongs to the RNA polymerase alpha chain family. Homodimer. The RNAP catalytic core consists of 2 alpha, 1 beta, 1 beta' and 1 omega subunit. When a sigma factor is associated with the core the holoenzyme is formed, which can initiate transcription.

It catalyses the reaction RNA(n) + a ribonucleoside 5'-triphosphate = RNA(n+1) + diphosphate. Its function is as follows. DNA-dependent RNA polymerase catalyzes the transcription of DNA into RNA using the four ribonucleoside triphosphates as substrates. This is DNA-directed RNA polymerase subunit alpha from Clostridium botulinum (strain Langeland / NCTC 10281 / Type F).